Consider the following 1704-residue polypeptide: Villidin (1704 aa).

4 WD repeats span residues 82-122, 133-173, 180-221, and 225-271; these read GHTD…LIKD, KQQK…EQSS, GHED…TPIQ, and THEG…SSQP. 2 disordered regions span residues 439 to 460 and 606 to 721; these read IGNS…DSPF and SVPS…NSST. Positions 442–456 are enriched in gly residues; that stretch reads SGSGGGGGDGDGNGG. Positions 459–563 constitute a PH 1 domain; that stretch reads PFITEGIVKQ…WCQSINAYRE (105 aa). 3 stretches are compositionally biased toward low complexity: residues 613–636, 651–701, and 709–721; these read QQQQ…TPTQ, SLKS…SSSS, and NNST…NSST. PH domains are found at residues 727–828 and 871–969; these read DIVI…QNLK and EQPL…AARK. Residues 848–877 are disordered; sequence LISSPMSDDESNTNEGGVEEEEEEQPLEGQ. Residues 854-873 show a composition bias toward acidic residues; the sequence is SDDESNTNEGGVEEEEEEQP. Gelsolin-like repeat units lie at residues 1025 to 1119, 1138 to 1241, 1293 to 1390, 1404 to 1494, and 1520 to 1615; these read KQKI…LGGN, IKTT…FANY, GRVK…FKTK, KKPS…FEST, and RFFV…FRAW. Residues 1641–1704 form the HP domain; it reads DYLKEIYTYE…EGIKKELFLF (64 aa).

It is found in the membrane. It localises to the cytoplasm. The protein resides in the cytoskeleton. In terms of biological role, may function as a linker between membranes and the actin cytoskeleton. The sequence is that of Villidin (vilA) from Dictyostelium discoideum (Social amoeba).